We begin with the raw amino-acid sequence, 828 residues long: Protein ELFN1 (828 aa).

Residues 1-27 (MAGRGWGALWVCVAAATLLHAGGLARA) form the signal peptide. Topologically, residues 28–418 (DCWLIEGDKG…VPSPSTATHY (391 aa)) are extracellular. N59 carries N-linked (GlcNAc...) asparagine glycosylation. 5 LRR repeats span residues 61-82 (TIVD…SLSR), 85-106 (NLTY…AFSG), 109-130 (NLQV…MLRG), 133-154 (KLEY…SFWE), and 157-178 (NIVN…TFAG). N-linked (GlcNAc...) asparagine glycans are attached at residues N85, N90, and N122. One can recognise an LRRCT domain in the interval 190–252 (NPFYCSCELL…LSKLQSVCTE (63 aa)). N-linked (GlcNAc...) asparagine glycosylation occurs at N210. The segment at 259–291 (VVGPPRPASGRSQPGRSPPPPPPPEPSDMPCAD) is disordered. Residues 274–285 (RSPPPPPPPEPS) show a composition bias toward pro residues. In terms of domain architecture, Fibronectin type-III spans 312-399 (QAEARPLIKV…HNHTCLTICL (88 aa)). An LRR 6 repeat occupies 318–342 (LIKVKQLTQNSATITVQLPSPFHRM). A glycan (N-linked (GlcNAc...) asparagine) is linked at N376. The helical transmembrane segment at 419-439 (IMTILGCLFGMVLVLGAVYYC) threads the bilayer. Residues 440 to 828 (LRRRRRQEEK…WKGVSAQHKS (389 aa)) are Cytoplasmic-facing. A Phosphoserine modification is found at S461. 3 disordered regions span residues 517 to 552 (TPKA…QSSV), 624 to 649 (LQRH…VRSP), and 696 to 732 (KGRQ…GLGR). Positions 529 to 541 (RTGDPPERRDCEL) are enriched in basic and acidic residues. The span at 632-649 (AAGPPRASTSSSGSVRSP) shows a compositional bias: low complexity. Position 645 is a phosphoserine (S645). Over residues 696–705 (KGRQYGEHRH) the composition is skewed to basic and acidic residues. A compositionally biased stretch (pro residues) spans 713–727 (AEPPAPPGPPPPPPH).

As to quaternary structure, interacts with PPP1CA.

The protein resides in the membrane. It is found in the cell projection. The protein localises to the dendrite. Functionally, postsynaptic protein that regulates circuit dynamics in the central nervous system by modulating the temporal dynamics of interneuron recruitment. Specifically present in excitatory synapses onto oriens-lacunosum molecular (OLM) interneurons and acts as a regulator of presynaptic release probability to direct the formation of highly facilitating pyramidal-OLM synapses. Inhibits phosphatase activity of protein phosphatase 1 (PP1) complexes. The polypeptide is Protein ELFN1 (ELFN1) (Homo sapiens (Human)).